The chain runs to 210 residues: Somatotropin (210 aa).

An N-terminal signal peptide occupies residues 1 to 22 (MAKALVLLSLVLVSVFVNNGTA). A Zn(2+)-binding site is contributed by histidine 38. Cysteine 71 and cysteine 183 are disulfide-bonded. Glutamate 192 lines the Zn(2+) pocket. An intrachain disulfide couples cysteine 200 to cysteine 208.

The protein belongs to the somatotropin/prolactin family.

The protein localises to the secreted. Its function is as follows. Growth hormone plays an important role in growth control and is involved in the regulation of several anabolic processes. Implicated as an osmoregulatory substance important for seawater adaptation. This Misgurnus mizolepis (Chinese weatherloach) protein is Somatotropin (gh).